The chain runs to 887 residues: Valine--tRNA ligase (887 aa).

The 'HIGH' region motif lies at 45–55 (PNVTGILHMGH). The 'KMSKS' region motif lies at 528–532 (KMSKS). Lys-531 is a binding site for ATP. The stretch at 817–887 (TGLLNNEAEI…LKESLKSFEE (71 aa)) forms a coiled coil.

The protein belongs to the class-I aminoacyl-tRNA synthetase family. ValS type 1 subfamily. As to quaternary structure, monomer.

It is found in the cytoplasm. The enzyme catalyses tRNA(Val) + L-valine + ATP = L-valyl-tRNA(Val) + AMP + diphosphate. Functionally, catalyzes the attachment of valine to tRNA(Val). As ValRS can inadvertently accommodate and process structurally similar amino acids such as threonine, to avoid such errors, it has a 'posttransfer' editing activity that hydrolyzes mischarged Thr-tRNA(Val) in a tRNA-dependent manner. The chain is Valine--tRNA ligase from Fusobacterium nucleatum subsp. nucleatum (strain ATCC 25586 / DSM 15643 / BCRC 10681 / CIP 101130 / JCM 8532 / KCTC 2640 / LMG 13131 / VPI 4355).